Here is a 493-residue protein sequence, read N- to C-terminus: Occludin (493 aa).

At 1–47 the chain is on the cytoplasmic side; that stretch reads MYSRPSNYAPSKDVYGGEMRSQPAYSYYPEEEIQHFYRWSSPPGIIK. An MARVEL domain is found at 41–250; it reads SPPGIIKIMS…IIFFAVKTRK (210 aa). A helical membrane pass occupies residues 48–70; it reads IMSILIVVMCVGIFACVASTLPW. Over 71–116 the chain is Extracellular; it reads DLDITGQSMGYGMGSGSYSGGYTGYGFGGSQMGLGFAYGGNYTDPR. A helical transmembrane segment spans residues 117-141; the sequence is AAKGFILAMAAFCFIIGLVIFVMLV. The Cytoplasmic segment spans residues 142 to 151; the sequence is TRTPLSTSRK. Residues 152-176 traverse the membrane as a helical segment; it reads FYLIVIIVSAIIGGLVFIATIVYTV. The Extracellular portion of the chain corresponds to 177–224; sequence GVNPVAQASGSAFYTQIVSICNQFYSPVQTGVFVNQYLYHYCVVEPQE. Residues cysteine 197 and cysteine 218 are joined by a disulfide bond. Residues 225–246 traverse the membrane as a helical segment; the sequence is AIAIVLGFLIVVAFAIIIFFAV. Over 247-493 the chain is Cytoplasmic; that stretch reads KTRKKINQYG…IKQMVSNYDK (247 aa). The segment at 334–407 is disordered; sequence YGMSPRHYSS…TKQRQEYKQE (74 aa). Over residues 352–361 the composition is skewed to basic residues; the sequence is APPKKRPGKP. Position 375 is a phosphothreonine; by CK2; in vitro (threonine 375). At serine 379 the chain carries Phosphoserine; by CK2; in vitro. A compositionally biased stretch (acidic residues) spans 379 to 389; that stretch reads SADELEDDSWD. The OCEL domain maps to 386 to 493; the sequence is DSWDSEYPPI…IKQMVSNYDK (108 aa). Residues 396–428 are a coiled coil; that stretch reads TQTKQRQEYKQEFASDLHEYKRLQAELDELSKI.

It belongs to the ELL/occludin family. In terms of assembly, interacts in vitro with cingulin, possibly directly. Interacts with ZO-1. Post-translationally, phosphorylated. Localized at tight junctions of both epithelial and endothelial cells.

Its subcellular location is the cell membrane. It localises to the cell junction. The protein localises to the tight junction. Probably plays a role in the formation and regulation of the tight junction (TJ) paracellular permeability barrier. The protein is Occludin (ocln) of Xenopus laevis (African clawed frog).